A 154-amino-acid chain; its full sequence is Protein X (154 aa).

The interval 68 to 117 is mitochondrial targeting sequence; sequence PCALRFTSARRMETTVNAHQILPKVLHKRTLGLPAMSTTDLEAYFKDCVF.

This sequence belongs to the orthohepadnavirus protein X family. May form homodimer. May interact with host CEBPA, CFLAR, CREB1, DDB1, E4F1, HBXIP, HSPD1/HSP60, NFKBIA, POLR2E and SMAD4. Interacts with host SMC5-SMC6 complex and induces its degradation. Interacts with host TRPC4AP; leading to prevent ubiquitination of TRPC4AP. Interacts with host PLSCR1; this interaction promotes ubiquitination and degradation of HBx and impairs HBx-mediated cell proliferation. Post-translationally, a fraction may be phosphorylated in insect cells and HepG2 cells, a human hepatoblastoma cell line. Phosphorylated in vitro by host protein kinase C or mitogen-activated protein kinase. N-acetylated in insect cells.

It localises to the host cytoplasm. Its subcellular location is the host nucleus. It is found in the host mitochondrion. Functionally, multifunctional protein that plays a role in silencing host antiviral defenses and promoting viral transcription. Does not seem to be essential for HBV infection. May be directly involved in development of cirrhosis and liver cancer (hepatocellular carcinoma). Most of cytosolic activities involve modulation of cytosolic calcium. The effect on apoptosis is controversial depending on the cell types in which the studies have been conducted. May induce apoptosis by localizing in mitochondria and causing loss of mitochondrial membrane potential. May also modulate apoptosis by binding host CFLAR, a key regulator of the death-inducing signaling complex (DISC). Promotes viral transcription by using the host E3 ubiquitin ligase DDB1 to target the SMC5-SMC6 complex to proteasomal degradation. This host complex would otherwise bind to viral episomal DNA, and prevents its transcription. Moderately stimulates transcription of many different viral and cellular transcription elements. Promoters and enhancers stimulated by HBx contain DNA binding sites for NF-kappa-B, AP-1, AP-2, c-EBP, ATF/CREB, or the calcium-activated factor NF-AT. In Homo sapiens (Human), this protein is Protein X.